Here is a 415-residue protein sequence, read N- to C-terminus: Serine hydroxymethyltransferase (415 aa).

Residues Leu-121 and 125–127 contribute to the (6S)-5,6,7,8-tetrahydrofolate site; that span reads GHL. Lys-230 is subject to N6-(pyridoxal phosphate)lysine. 355–357 is a (6S)-5,6,7,8-tetrahydrofolate binding site; the sequence is SPF.

The protein belongs to the SHMT family. As to quaternary structure, homodimer. It depends on pyridoxal 5'-phosphate as a cofactor.

It is found in the cytoplasm. It catalyses the reaction (6R)-5,10-methylene-5,6,7,8-tetrahydrofolate + glycine + H2O = (6S)-5,6,7,8-tetrahydrofolate + L-serine. The protein operates within one-carbon metabolism; tetrahydrofolate interconversion. It participates in amino-acid biosynthesis; glycine biosynthesis; glycine from L-serine: step 1/1. Its function is as follows. Catalyzes the reversible interconversion of serine and glycine with tetrahydrofolate (THF) serving as the one-carbon carrier. This reaction serves as the major source of one-carbon groups required for the biosynthesis of purines, thymidylate, methionine, and other important biomolecules. Also exhibits THF-independent aldolase activity toward beta-hydroxyamino acids, producing glycine and aldehydes, via a retro-aldol mechanism. In Lactococcus lactis subsp. cremoris (strain SK11), this protein is Serine hydroxymethyltransferase.